The sequence spans 648 residues: 60 kDa heat shock protein homolog 1, mitochondrial (648 aa).

The transit peptide at 1–55 directs the protein to the mitochondrion; it reads MFRSCVPKAITSSRCFARMYSKDVRFGSGVRAMMIRGVDILADAVAVTMGPKGRS.

It belongs to the chaperonin (HSP60) family.

It is found in the mitochondrion matrix. Functionally, prevents misfolding and promotes the refolding and proper assembly of unfolded polypeptides generated under stress conditions. This Drosophila melanogaster (Fruit fly) protein is 60 kDa heat shock protein homolog 1, mitochondrial (Hsp60B).